Here is a 220-residue protein sequence, read N- to C-terminus: Uracil-DNA glycosylase 1 (220 aa).

The Proton acceptor role is filled by Asp65.

The protein belongs to the uracil-DNA glycosylase (UDG) superfamily. UNG family.

Its subcellular location is the cytoplasm. It catalyses the reaction Hydrolyzes single-stranded DNA or mismatched double-stranded DNA and polynucleotides, releasing free uracil.. Its function is as follows. Excises uracil residues from the DNA which can arise as a result of misincorporation of dUMP residues by DNA polymerase or due to deamination of cytosine. This is Uracil-DNA glycosylase 1 from Bacteroides fragilis (strain YCH46).